The chain runs to 303 residues: Ribosomal RNA small subunit methyltransferase A (303 aa).

S-adenosyl-L-methionine-binding residues include Asn37, Val39, Gly64, Glu85, Asp115, and Asn138.

The protein belongs to the class I-like SAM-binding methyltransferase superfamily. rRNA adenine N(6)-methyltransferase family. RsmA subfamily.

Its subcellular location is the cytoplasm. The catalysed reaction is adenosine(1518)/adenosine(1519) in 16S rRNA + 4 S-adenosyl-L-methionine = N(6)-dimethyladenosine(1518)/N(6)-dimethyladenosine(1519) in 16S rRNA + 4 S-adenosyl-L-homocysteine + 4 H(+). Functionally, specifically dimethylates two adjacent adenosines (A1518 and A1519) in the loop of a conserved hairpin near the 3'-end of 16S rRNA in the 30S particle. May play a critical role in biogenesis of 30S subunits. The sequence is that of Ribosomal RNA small subunit methyltransferase A from Bifidobacterium adolescentis (strain ATCC 15703 / DSM 20083 / NCTC 11814 / E194a).